The sequence spans 100 residues: Pancreatic polypeptide prohormone (100 aa).

Positions 1 to 29 (MAVAYCCLSLFLVSTWVALLLQPLQGTWG) are cleaved as a signal peptide. At Y65 the chain carries Tyrosine amide.

Belongs to the NPY family. No icosapeptide-like peptide is cleaved from the C-terminal.

It localises to the secreted. Its function is as follows. Hormone secreted by pancreatic cells that acts as a regulator of pancreatic and gastrointestinal functions probably by signaling through the G protein-coupled receptor NPY4R2. The polypeptide is Pancreatic polypeptide prohormone (Ppy) (Mus musculus (Mouse)).